A 414-amino-acid polypeptide reads, in one-letter code: BICD family-like cargo adapter 2 (414 aa).

Positions 34 to 341 (GQALLEKNEE…DALNQQLLNT (308 aa)) form a coiled coil. Residues 372–384 (QEKEKENNKERTG) show a composition bias toward basic and acidic residues. The tract at residues 372-399 (QEKEKENNKERTGFQRGTRTTKSLRLRG) is disordered.

This Danio rerio (Zebrafish) protein is BICD family-like cargo adapter 2 (bicdl2).